The chain runs to 64 residues: uncharacterized protein (64 aa).

To P.abyssi PAB3148.

This is an uncharacterized protein from Archaeoglobus fulgidus (strain ATCC 49558 / DSM 4304 / JCM 9628 / NBRC 100126 / VC-16).